Consider the following 243-residue polypeptide: Carboxy-S-adenosyl-L-methionine synthase (243 aa).

Residues Tyr-40, 65–67 (GCS), 90–91 (DN), 118–119 (DI), Asn-133, and Arg-200 each bind S-adenosyl-L-methionine.

Belongs to the class I-like SAM-binding methyltransferase superfamily. Cx-SAM synthase family. In terms of assembly, homodimer.

It carries out the reaction prephenate + S-adenosyl-L-methionine = carboxy-S-adenosyl-L-methionine + 3-phenylpyruvate + H2O. In terms of biological role, catalyzes the conversion of S-adenosyl-L-methionine (SAM) to carboxy-S-adenosyl-L-methionine (Cx-SAM). This chain is Carboxy-S-adenosyl-L-methionine synthase, found in Shewanella putrefaciens (strain CN-32 / ATCC BAA-453).